We begin with the raw amino-acid sequence, 93 residues long: Large ribosomal subunit protein bL36m (93 aa).

A mitochondrion-targeting transit peptide spans Met1–Ser35.

It belongs to the bacterial ribosomal protein bL36 family. In terms of assembly, component of the mitochondrial large ribosomal subunit (mt-LSU). Mature yeast 74S mitochondrial ribosomes consist of a small (37S) and a large (54S) subunit. The 37S small subunit contains a 15S ribosomal RNA (15S mt-rRNA) and 34 different proteins. The 54S large subunit contains a 21S rRNA (21S mt-rRNA) and 46 different proteins. bL36m has a zinc binding site.

It is found in the mitochondrion. In terms of biological role, component of the mitochondrial ribosome (mitoribosome), a dedicated translation machinery responsible for the synthesis of mitochondrial genome-encoded proteins, including at least some of the essential transmembrane subunits of the mitochondrial respiratory chain. The mitoribosomes are attached to the mitochondrial inner membrane and translation products are cotranslationally integrated into the membrane. bL36m may be involved in a process influencing telomere capping. This is Large ribosomal subunit protein bL36m (RTC6) from Saccharomyces cerevisiae (strain ATCC 204508 / S288c) (Baker's yeast).